A 1519-amino-acid polypeptide reads, in one-letter code: Putative lipoprotein YghJ (1519 aa).

The first 23 residues, 1-23 (MNKKFKYKKSLLAAILSATLLAG), serve as a signal peptide directing secretion. 2 disordered regions span residues 22-107 (AGCD…GATC) and 226-247 (NAAT…TTPG). A lipid anchor (N-palmitoyl cysteine) is attached at Cys-24. Cys-24 carries the S-diacylglycerol cysteine lipid modification. The segment covering 31 to 42 (SSSDTPPVDSGT) has biased composition (low complexity). The segment covering 51-77 (DPTPNPEPTPEPTPDPEPTPEPIPDPE) has biased composition (pro residues). A compositionally biased stretch (polar residues) spans 97-107 (GGSQRVTGATC). Residues 234-247 (STHTSPVVPVTTPG) show a composition bias toward low complexity. A Peptidase M60 domain is found at 1080–1380 (GNMQSTGLWA…MYAQLKEWAE (301 aa)). The tract at residues 1497-1519 (DLPKPEQGPETINQVTEHKMSAE) is disordered.

The protein to V.cholerae AcfD (VC_0845).

The protein resides in the cell membrane. Functionally, may be a substrate of the type II secretion system beta (T2SS-beta). This Escherichia coli O78:H11 (strain H10407 / ETEC) protein is Putative lipoprotein YghJ (yghJ).